We begin with the raw amino-acid sequence, 280 residues long: tRNA (guanine-N(1)-)-methyltransferase (280 aa).

The interval 71–94 (DDVSSGTASTQDLQSALPHLSKPR) is disordered. Polar residues predominate over residues 74–84 (SSGTASTQDLQ). Residues Gly146 and 170-175 (IGDYVL) contribute to the S-adenosyl-L-methionine site.

The protein belongs to the RNA methyltransferase TrmD family. As to quaternary structure, homodimer.

It is found in the cytoplasm. The enzyme catalyses guanosine(37) in tRNA + S-adenosyl-L-methionine = N(1)-methylguanosine(37) in tRNA + S-adenosyl-L-homocysteine + H(+). Functionally, specifically methylates guanosine-37 in various tRNAs. The chain is tRNA (guanine-N(1)-)-methyltransferase from Corynebacterium aurimucosum (strain ATCC 700975 / DSM 44827 / CIP 107346 / CN-1) (Corynebacterium nigricans).